A 556-amino-acid polypeptide reads, in one-letter code: Phospholipase D (556 aa).

The first 47 residues, 1–47, serve as a signal peptide directing secretion; sequence MTSDQRPARLPTHKGKLLAPHRLHRLIPVSVALTTVCAALPSSTAYA. One can recognise a PLD phosphodiesterase 1 domain in the interval 210-237; that stretch reads SLSWNHSKLLVVDGKTAITGGINGWKDD. A disordered region spans residues 326 to 360; it reads SDPSSGYHPDLPTAPDTKCTVGLHDNTNADRDYDT. One can recognise a PLD phosphodiesterase 2 domain in the interval 484-511; that stretch reads KPYALHHKLVSVDDSAFYIGSKNLYPAW.

This sequence belongs to the phospholipase D family. Post-translationally, probably has at least 1 disulfide bond.

It localises to the secreted. It carries out the reaction a 1,2-diacyl-sn-glycero-3-phosphocholine + H2O = a 1,2-diacyl-sn-glycero-3-phosphate + choline + H(+). Its activity is regulated as follows. Inhibited by mercaptoethanol and dithiothreitol. Functionally, a reversible phospholipase active on phosphatidylcholine (PC) and phosphatidylethanolamine. Lysophosphatidylcholine and egg sphingomyelin are hydrolyzed about 50 times and 100 times more slowly than PC, respectively. During the transphosphatidylation reaction straight-chain hydroxy compounds, such as triethyleneglycol and triethyleneglycol monomethyl ether, were phosphatidylated in good yield, as were monosaccharides. Disaccharides and sugar alcohol reacted slowly, while N-acetyl-D-galactosamine, D-galactosamine and D-galacturonic acid were not phosphatidylated. In Streptomyces antibioticus, this protein is Phospholipase D.